The primary structure comprises 103 residues: Cell division protein FtsB (103 aa).

The Cytoplasmic segment spans residues M1 to K3. A helical transmembrane segment spans residues L4–F21. Topologically, residues G22–R103 are periplasmic. A coiled-coil region spans residues N33–G62.

The protein belongs to the FtsB family. Part of a complex composed of FtsB, FtsL and FtsQ.

It localises to the cell inner membrane. Essential cell division protein. May link together the upstream cell division proteins, which are predominantly cytoplasmic, with the downstream cell division proteins, which are predominantly periplasmic. This is Cell division protein FtsB from Salmonella arizonae (strain ATCC BAA-731 / CDC346-86 / RSK2980).